Reading from the N-terminus, the 118-residue chain is Evasin P1080 (118 aa).

The N-terminal stretch at 1-19 (FFQLAVFVVILFNINLLSA) is a signal peptide. 3 disulfides stabilise this stretch: Cys-41–Cys-60, Cys-45–Cys-62, and Cys-56–Cys-73. An N-linked (GlcNAc...) asparagine glycan is attached at Asn-44. Residues Asn-67 and Asn-104 are each glycosylated (N-linked (GlcNAc...) asparagine).

It localises to the secreted. In terms of biological role, salivary chemokine-binding protein which binds to host chemokines CXCL1, CXCL2, CXCL3, CXCL4, CXCL5, CXCL6, CXCL10, CXCL11 and CXCL13. The sequence is that of Evasin P1080 from Ixodes ricinus (Common tick).